The primary structure comprises 38 residues: Large ribosomal subunit protein bL36 (38 aa).

The protein belongs to the bacterial ribosomal protein bL36 family.

The chain is Large ribosomal subunit protein bL36 from Amoebophilus asiaticus (strain 5a2).